A 263-amino-acid polypeptide reads, in one-letter code: Purine nucleoside phosphorylase SE_0862 (263 aa).

Residues H79, C124, and H141 each contribute to the Zn(2+) site.

The protein belongs to the purine nucleoside phosphorylase YfiH/LACC1 family. In terms of assembly, homodimer. Cu(2+) serves as cofactor. Requires Zn(2+) as cofactor.

It carries out the reaction adenosine + phosphate = alpha-D-ribose 1-phosphate + adenine. The enzyme catalyses S-methyl-5'-thioadenosine + phosphate = 5-(methylsulfanyl)-alpha-D-ribose 1-phosphate + adenine. It catalyses the reaction inosine + phosphate = alpha-D-ribose 1-phosphate + hypoxanthine. The catalysed reaction is adenosine + H2O + H(+) = inosine + NH4(+). Purine nucleoside enzyme that catalyzes the phosphorolysis of adenosine and inosine nucleosides, yielding D-ribose 1-phosphate and the respective free bases, adenine and hypoxanthine. Also catalyzes the phosphorolysis of S-methyl-5'-thioadenosine into adenine and S-methyl-5-thio-alpha-D-ribose 1-phosphate. Also has adenosine deaminase activity. The chain is Purine nucleoside phosphorylase SE_0862 from Staphylococcus epidermidis (strain ATCC 12228 / FDA PCI 1200).